Consider the following 68-residue polypeptide: U-poneritoxin(01)-Om4b (68 aa).

Positions 1–25 are cleaved as a signal peptide; sequence MKPSGLTLAFLVVFMMAIMYNSVQA. Positions 26-39 are excised as a propeptide; sequence EALADADAEAFAEA.

It belongs to the formicidae venom precursor-01 superfamily. As to quaternary structure, homo- or heterodimer with PLP4 (AC A0A348G5W0); disulfide-linked. Truncated sequences of this peptide have also been found in the venom. It is possible they have been cleaved in the venom. As to expression, expressed by the venom gland.

It is found in the secreted. Functionally, this homodimer composed of two cationic amphipathic alpha-helical peptides has antimicrobial activities against E.coli, S.aureus (MIC=3.1 uM), and S.cerevisiae (MIC=3.1 uM). It also shows histamine-releasing activity (66.4% at 10 uM) and a weak hemolytic activity (10.5% at 50 uM). The sequence is that of U-poneritoxin(01)-Om4b from Odontomachus monticola (Trap-jaw ant).